The sequence spans 194 residues: HTH-type transcriptional regulator BetI (194 aa).

Residues 8-68 (EIRRAQLIDA…ATMRHVLRDL (61 aa)) enclose the HTH tetR-type domain. Positions 31–50 (TLASVAQRANISTGIVSHYF) form a DNA-binding region, H-T-H motif.

It functions in the pathway amine and polyamine biosynthesis; betaine biosynthesis via choline pathway [regulation]. Its function is as follows. Repressor involved in the biosynthesis of the osmoprotectant glycine betaine. It represses transcription of the choline transporter BetT and the genes of BetAB involved in the synthesis of glycine betaine. In Burkholderia lata (strain ATCC 17760 / DSM 23089 / LMG 22485 / NCIMB 9086 / R18194 / 383), this protein is HTH-type transcriptional regulator BetI.